The primary structure comprises 385 residues: Ribosomal RNA large subunit methyltransferase G (385 aa).

It belongs to the methyltransferase superfamily. RlmG family.

It is found in the cytoplasm. It catalyses the reaction guanosine(1835) in 23S rRNA + S-adenosyl-L-methionine = N(2)-methylguanosine(1835) in 23S rRNA + S-adenosyl-L-homocysteine + H(+). In terms of biological role, specifically methylates the guanine in position 1835 (m2G1835) of 23S rRNA. This chain is Ribosomal RNA large subunit methyltransferase G, found in Vibrio campbellii (strain ATCC BAA-1116).